The chain runs to 448 residues: Solute carrier family 52, riboflavin transporter, member 1 (448 aa).

The next 5 helical transmembrane spans lie at 14 to 34, 47 to 67, 79 to 99, 124 to 144, and 147 to 167; these read LLVALFGMGSWAAVNGIWVEL, LPSYLSVVVALGNLGLLVVTL, VPIQVVQVLSVVGTALLAPLW, ACCTSNVTFLPFLSHLPPPFL, and FFLGQGLSALLPCVLALVQGV. The N-linked (GlcNAc...) asparagine glycan is linked to asparagine 178. A helical transmembrane segment spans residues 191–211; it reads FPASTFFWALTALLVTSAAAF. The segment at 225-267 is disordered; it reads TTGGSGPELQLGSPGAEEEEKEEEEALPLQEPPSQAAGTIPGP. Acidic residues predominate over residues 240-250; sequence AEEEEKEEEEA. The next 5 membrane-spanning stretches (helical) occupy residues 280–300, 315–335, 342–362, 369–389, and 407–427; these read AFLLGLMAFTSAVTNGVLPSV, LAVVLGSAANPLACFLAMGVL, LVGLSLLGMLFGAYLMALAIL, VGTTAGVVLVVLSWVLCLCVF, and ALLAAGVAIQVGSLLGAGAMF.

Belongs to the riboflavin transporter family. In terms of tissue distribution, widely expressed. Highly expressed in the testis, placenta and small intestine. Expressed at lower level in other tissues.

The protein localises to the cell membrane. The catalysed reaction is riboflavin(in) = riboflavin(out). With respect to regulation, the activity is strongly inhibited by riboflavin analogs, such as lumiflavin. Weakly inhibited by flavin adenine dinucleotide (FAD). Plasma membrane transporter mediating the uptake by cells of the water soluble vitamin B2/riboflavin that plays a key role in biochemical oxidation-reduction reactions of the carbohydrate, lipid, and amino acid metabolism. Humans are unable to synthesize vitamin B2/riboflavin and must obtain it via intestinal absorption. Its function is as follows. (Microbial infection) May function as a cell receptor to retroviral envelopes similar to the porcine endogenous retrovirus (PERV-A). The sequence is that of Solute carrier family 52, riboflavin transporter, member 1 from Homo sapiens (Human).